The chain runs to 288 residues: G1/S-specific cyclin-D2 (288 aa).

Residues 26 to 151 (VLQNLLTIEE…VVLGKLKWNL (126 aa)) form the Cyclin N-terminal domain. The tract at residues 264-288 (DQDGSKSEDELDQASTPTDVRDIDL) is disordered. S270 bears the Phosphoserine mark. At T279 the chain carries Phosphothreonine.

It belongs to the cyclin family. Cyclin D subfamily. As to quaternary structure, interacts with either CDK4 or CDK6 protein kinase to form a serine/threonine kinase holoenzyme complex. The cyclin subunit imparts substrate specificity to the complex. In terms of processing, phosphorylation at Thr-279 by MAP kinases is required for ubiquitination and degradation by the DCX(AMBRA1) complex. Ubiquitinated by the DCX(AMBRA1) complex during the transition from G1 to S cell phase, leading to its degradation: ubiquitination is dependent on Thr-279 phosphorylation. The DCX(AMBRA1) complex represents the major regulator of CCND2 stability during the G1/S transition. Polyubiquitinated by the SCF(FBXL2) complex, leading to proteasomal degradation.

It is found in the nucleus. Its subcellular location is the cytoplasm. It localises to the nucleus membrane. Regulatory component of the cyclin D2-CDK4 (DC) complex that phosphorylates and inhibits members of the retinoblastoma (RB) protein family including RB1 and regulates the cell-cycle during G(1)/S transition. Phosphorylation of RB1 allows dissociation of the transcription factor E2F from the RB/E2F complex and the subsequent transcription of E2F target genes which are responsible for the progression through the G(1) phase. Hypophosphorylates RB1 in early G(1) phase. Cyclin D-CDK4 complexes are major integrators of various mitogenenic and antimitogenic signals. The sequence is that of G1/S-specific cyclin-D2 (CCND2) from Sus scrofa (Pig).